Consider the following 87-residue polypeptide: U3-theraphotoxin-Cg1b (87 aa).

Residues 1-23 (MRTLTLIAIVTCAALVIFHAAAA) form the signal peptide. Positions 24 to 48 (EELEAQDVIQPEDIFTGVATLEEDR) are excised as a propeptide. Intrachain disulfides connect C52/C65, C56/C79, and C73/C84.

This sequence belongs to the neurotoxin 12 (Hwtx-2) family. 03 (juruin) subfamily. Expressed by the venom gland.

It is found in the secreted. Probable ion channel inhibitor. This chain is U3-theraphotoxin-Cg1b, found in Chilobrachys guangxiensis (Chinese earth tiger tarantula).